Consider the following 353-residue polypeptide: sn-glycerol-3-phosphate import ATP-binding protein UgpC (353 aa).

The ABC transporter domain occupies 4–234 (ILLNDVRKSY…PASEFVAGFI (231 aa)). Position 36-43 (36-43 (GPSGCGKS)) interacts with ATP.

It belongs to the ABC transporter superfamily. sn-glycerol-3-phosphate importer (TC 3.A.1.1.3) family. In terms of assembly, the complex is composed of two ATP-binding proteins (UgpC), two transmembrane proteins (UgpA and UgpE) and a solute-binding protein (UgpB).

It localises to the cell inner membrane. It carries out the reaction sn-glycerol 3-phosphate(out) + ATP + H2O = sn-glycerol 3-phosphate(in) + ADP + phosphate + H(+). In terms of biological role, part of the ABC transporter complex UgpBAEC involved in sn-glycerol-3-phosphate (G3P) import. Responsible for energy coupling to the transport system. In Paracoccus denitrificans (strain Pd 1222), this protein is sn-glycerol-3-phosphate import ATP-binding protein UgpC.